Consider the following 373-residue polypeptide: Chaperone protein DnaJ (373 aa).

The 67-residue stretch at Asp-5 to Gly-71 folds into the J domain. A CR-type zinc finger spans residues Gly-144–Arg-226. Positions 157, 160, 174, 177, 200, 203, 214, and 217 each coordinate Zn(2+). CXXCXGXG motif repeat units lie at residues Cys-157–Gly-164, Cys-174–Gly-181, Cys-200–Gly-207, and Cys-214–Gly-221.

It belongs to the DnaJ family. In terms of assembly, homodimer. Requires Zn(2+) as cofactor.

The protein localises to the cytoplasm. Participates actively in the response to hyperosmotic and heat shock by preventing the aggregation of stress-denatured proteins and by disaggregating proteins, also in an autonomous, DnaK-independent fashion. Unfolded proteins bind initially to DnaJ; upon interaction with the DnaJ-bound protein, DnaK hydrolyzes its bound ATP, resulting in the formation of a stable complex. GrpE releases ADP from DnaK; ATP binding to DnaK triggers the release of the substrate protein, thus completing the reaction cycle. Several rounds of ATP-dependent interactions between DnaJ, DnaK and GrpE are required for fully efficient folding. Also involved, together with DnaK and GrpE, in the DNA replication of plasmids through activation of initiation proteins. The protein is Chaperone protein DnaJ of Thermosipho melanesiensis (strain DSM 12029 / CIP 104789 / BI429).